Reading from the N-terminus, the 513-residue chain is Microtubule-associated protein 70-5 (513 aa).

Disordered regions lie at residues 1 to 20 (MTAAENPFVSDTSSLQSQLK), 60 to 81 (KLGATENQVDQKELERKKLEEE), 347 to 367 (FLTSGGGSKKRSSSQLRGSVT), and 393 to 413 (ANGLTDQHEEDSERKTEEDGN). A compositionally biased stretch (polar residues) spans 9 to 18 (VSDTSSLQSQ). Residues 10 to 322 (SDTSSLQSQL…LKLRLKTIED (313 aa)) are a coiled coil. Over residues 60–80 (KLGATENQVDQKELERKKLEE) the composition is skewed to basic and acidic residues. The interval 190–400 (FLEKINRQKV…ITANGLTDQH (211 aa)) is required for targeting to microtubules. Positions 426–501 (DRLQKEVIAL…EESKLCRKAK (76 aa)) form a coiled coil.

This sequence belongs to the MAP70 family. In terms of assembly, interacts with MAP70.1 and itself.

The protein resides in the cytoplasm. Its subcellular location is the cytoskeleton. Functionally, plant-specific protein that interact with microtubules and regulates microtubule dynamics. May play a role in anisotropic cell expansion and organ growth. In association with MAP70.1, is essential for the normal banding pattern of secondary cell wall and for the proper development of xylem tracheary elements and wood formation. This chain is Microtubule-associated protein 70-5 (MAP70.5), found in Arabidopsis thaliana (Mouse-ear cress).